The primary structure comprises 87 residues: Virulence protein PagD (87 aa).

The N-terminal stretch at 1–20 (MKHHAFMLWSLLIFSFHVLA) is a signal peptide. Positions 46–87 (QPPTNTDKKQARQISSPSCPTTKPMMSAPVNDARKGNTFSRT) are disordered. The segment covering 57–66 (RQISSPSCPT) has biased composition (polar residues).

Putative function in virulence. Could be involved in promoting S.typhimurium survival within macrophages. The polypeptide is Virulence protein PagD (pagD) (Salmonella typhimurium (strain LT2 / SGSC1412 / ATCC 700720)).